Reading from the N-terminus, the 163-residue chain is Small ribosomal subunit protein uS9 (163 aa).

Residues 1–11 (MAENTNDSQVV) show a composition bias toward polar residues. Residues 1 to 40 (MAENTNDSQVVETEEELTNYTTETNAGAGTGTSAIEPGYG) are disordered. Over residues 18–27 (TNYTTETNAG) the composition is skewed to low complexity.

It belongs to the universal ribosomal protein uS9 family.

This is Small ribosomal subunit protein uS9 from Bifidobacterium longum (strain DJO10A).